The following is a 355-amino-acid chain: N6-Methyl-AMP deaminase (355 aa).

Residues H24 and H26 each contribute to the Zn(2+) site. N(6)-methyl-AMP-binding positions include H26, N28, H74, 106-109 (STPR), D148, and G181. Zn(2+) is bound at residue H208. Residues E211, D293, and D294 each contribute to the N(6)-methyl-AMP site. Residue E211 is the Proton donor of the active site. D293 is a Zn(2+) binding site.

The protein belongs to the metallo-dependent hydrolases superfamily. Adenosine and AMP deaminases family. As to quaternary structure, monomer. The cofactor is Zn(2+).

The enzyme catalyses N(6)-methyl-AMP + H2O + H(+) = IMP + methylamine. Catalyzes the hydrolysis of the free cytosolic methylated adenosine nucleotide N(6)-methyl-AMP (N6-mAMP) to produce inositol monophosphate (IMP) and methylamine. Is required for the catabolism of cytosolic N6-mAMP, which is derived from the degradation of mRNA containing N6-methylated adenine (m6A). Catalyzes the removal of different alkyl groups not only from N6-substituted purine or 2-aminopurine nucleoside monophosphates but also from O6-substituted compounds in vitro. The sequence is that of N6-Methyl-AMP deaminase from Homo sapiens (Human).